A 468-amino-acid polypeptide reads, in one-letter code: Ribosomal lysine N-methyltransferase 4 (468 aa).

One can recognise an SET domain in the interval Glu-22–Gly-302. The disordered stretch occupies residues Ile-188–His-225. Tyr-301 is an S-adenosyl-L-methionine binding site.

It belongs to the class V-like SAM-binding methyltransferase superfamily. Histone-lysine methyltransferase family. SETD6 subfamily.

Its subcellular location is the nucleus. Functionally, S-adenosyl-L-methionine-dependent protein-lysine N-methyltransferase that monomethylates 60S ribosomal protein L42 (rpl42) at 'Lys-55'. The chain is Ribosomal lysine N-methyltransferase 4 from Schizosaccharomyces pombe (strain 972 / ATCC 24843) (Fission yeast).